We begin with the raw amino-acid sequence, 143 residues long: Transthyretin-like protein 33 (143 aa).

A signal peptide spans 1–20; it reads MSRLACISSLFILCAIGSEA.

It belongs to the nematode transthyretin-like family. As to expression, expressed in head cells next to and anterior of the first pharyngeal bulb, the pharynx, and the hypodermis.

It is found in the secreted. Protects dopaminergic neurons from degeneration caused by oxidative stress. The protein is Transthyretin-like protein 33 of Caenorhabditis elegans.